The chain runs to 500 residues: Aspartyl/glutamyl-tRNA(Asn/Gln) amidotransferase subunit B (500 aa).

Belongs to the GatB/GatE family. GatB subfamily. In terms of assembly, heterotrimer of A, B and C subunits.

The enzyme catalyses L-glutamyl-tRNA(Gln) + L-glutamine + ATP + H2O = L-glutaminyl-tRNA(Gln) + L-glutamate + ADP + phosphate + H(+). The catalysed reaction is L-aspartyl-tRNA(Asn) + L-glutamine + ATP + H2O = L-asparaginyl-tRNA(Asn) + L-glutamate + ADP + phosphate + 2 H(+). In terms of biological role, allows the formation of correctly charged Asn-tRNA(Asn) or Gln-tRNA(Gln) through the transamidation of misacylated Asp-tRNA(Asn) or Glu-tRNA(Gln) in organisms which lack either or both of asparaginyl-tRNA or glutaminyl-tRNA synthetases. The reaction takes place in the presence of glutamine and ATP through an activated phospho-Asp-tRNA(Asn) or phospho-Glu-tRNA(Gln). The sequence is that of Aspartyl/glutamyl-tRNA(Asn/Gln) amidotransferase subunit B from Rhizobium etli (strain CIAT 652).